The following is a 487-amino-acid chain: E3 ubiquitin-protein ligase TRIM50 (487 aa).

The RING-type zinc finger occupies 16–57; sequence CPICLEVFKEPLMLQCGHSYCKGCLVSLSCHLDAELRCPVCR. The segment at 84–125 adopts a B box-type zinc-finger fold; it reads PEPKVCVHHRNPLSLFCEKDQELICGLCGLLGSHQHHPVTPV. Residues cysteine 89, histidine 92, cysteine 111, and histidine 117 each coordinate Zn(2+). Coiled-coil stretches lie at residues 125–169 and 204–235; these read VSTV…NESD and LVAS…FGNE. The 200-residue stretch at 276–475 folds into the B30.2/SPRY domain; sequence DIKLTVWKRL…LPMVLPPPSG (200 aa). Lysine 373 carries the post-translational modification N6-acetyllysine. Positions 468 to 487 are disordered; that stretch reads MVLPPPSGPGPLSPEQPTKL. Residues 469–481 show a composition bias toward pro residues; sequence VLPPPSGPGPLSP.

The protein belongs to the TRIM/RBCC family. Can form dimers and trimers. Interacts with several E2 ubiquitin-conjugating enzymes, including UBE2L6, UBE2E1, UBE2E3. No interaction with UBE2H. Interacts with BECN1. Interacts with SQSTM1. Interacts with NLRP3. Post-translationally, auto-ubiquitinated. Acetylated by EP300 and KAT2B. HDAC6 drives TRIM50 deacetylation. Acetylation antagonizes with TRIM50 ubiquitination.

Its subcellular location is the cytoplasm. The catalysed reaction is S-ubiquitinyl-[E2 ubiquitin-conjugating enzyme]-L-cysteine + [acceptor protein]-L-lysine = [E2 ubiquitin-conjugating enzyme]-L-cysteine + N(6)-ubiquitinyl-[acceptor protein]-L-lysine.. Its function is as follows. E3 ubiquitin-protein ligase that ubiquitinates Beclin-1/BECN1 in a 'Lys-63'-dependent manner enhancing its binding to ULK1. In turn, promotes starvation-induced autophagy activation. Also interacts with p62/SQSTM1 protein and thereby induces the formation and the autophagy clearance of aggresome-associated polyubiquitinated proteins through HDAC6 interaction. Also promotes NLRP3 inflammasome activation by directly inducing NLRP3 oligomerization independent of its E3 ligase function. The protein is E3 ubiquitin-protein ligase TRIM50 of Homo sapiens (Human).